A 223-amino-acid polypeptide reads, in one-letter code: Probable glutathione S-transferase (223 aa).

The 80-residue stretch at 2–81 (AEVKLLGFWY…YIDETFEGPS (80 aa)) folds into the GST N-terminal domain. Glutathione-binding positions include serine 12, lysine 39, valine 53, and 65-66 (ES). Residues 86–212 (DPYDRALARF…ELLAFFRARF (127 aa)) form the GST C-terminal domain.

This sequence belongs to the GST superfamily. HSP26 family. Root tip-specific expression.

The catalysed reaction is RX + glutathione = an S-substituted glutathione + a halide anion + H(+). The chain is Probable glutathione S-transferase from Nicotiana tabacum (Common tobacco).